The chain runs to 473 residues: MSKPVITRFAPSPTGYLHIGGARTALFNWLYAKHCGGKMLLRIEDTDRERSTEAATAAILDGLTWLGLDWDGEAISQFERAPRHREVAEELVANGKAYYCYASPEELEEMREKARAEGRPPRYDGRWRDRDPSEAPAGVKPVIRIKAPRDGETVVHDAVQGDVRFPNKDLDDFIILRSDGTPTYMHAVVVDDHDMGVTHIIRGGDHLTNAARQTIIYNAMGWDVPQMSHISLIHGADGAKLSKRHGALGVDAYRAMGYLPAALRNYLVRLGWSHGDDEIMSTEQMIEWFDVKDINKGAARFDFQKLEAINGLYMRSSDDQALFDALVAVLPEIEGGKELAEALDDKGRAQLLLAMPGLKERAKTLVELADGAKFIFASRPLALDEKAASLLNDEGRAVLKPVYPVLEAVGEWTAESLDAAIRAHAEAEGLKLGKIAQPLRAALTGRATSPGVFDVLVVLGREESLARIGDQIG.

The 'HIGH' region motif lies at 11 to 21 (PSPTGYLHIGG). Over residues 113–133 (KARAEGRPPRYDGRWRDRDPS) the composition is skewed to basic and acidic residues. The disordered stretch occupies residues 113–136 (KARAEGRPPRYDGRWRDRDPSEAP). The short motif at 240-244 (KLSKR) is the 'KMSKS' region element. Residue Lys243 coordinates ATP.

It belongs to the class-I aminoacyl-tRNA synthetase family. Glutamate--tRNA ligase type 1 subfamily. Monomer.

It localises to the cytoplasm. The enzyme catalyses tRNA(Glu) + L-glutamate + ATP = L-glutamyl-tRNA(Glu) + AMP + diphosphate. Functionally, catalyzes the attachment of glutamate to tRNA(Glu) in a two-step reaction: glutamate is first activated by ATP to form Glu-AMP and then transferred to the acceptor end of tRNA(Glu). This Brucella suis biovar 1 (strain 1330) protein is Glutamate--tRNA ligase 2.